The following is a 93-amino-acid chain: Small ribosomal subunit protein uS19 (93 aa).

This sequence belongs to the universal ribosomal protein uS19 family.

In terms of biological role, protein S19 forms a complex with S13 that binds strongly to the 16S ribosomal RNA. The polypeptide is Small ribosomal subunit protein uS19 (Maridesulfovibrio salexigens (strain ATCC 14822 / DSM 2638 / NCIMB 8403 / VKM B-1763) (Desulfovibrio salexigens)).